The chain runs to 176 residues: Large ribosomal subunit protein uL6 (176 aa).

This sequence belongs to the universal ribosomal protein uL6 family. In terms of assembly, part of the 50S ribosomal subunit.

Functionally, this protein binds to the 23S rRNA, and is important in its secondary structure. It is located near the subunit interface in the base of the L7/L12 stalk, and near the tRNA binding site of the peptidyltransferase center. This is Large ribosomal subunit protein uL6 from Burkholderia mallei (strain NCTC 10247).